The following is a 157-amino-acid chain: SsrA-binding protein (157 aa).

Residues 132–157 (EHDKRDTIKEREGKREVERAMKSRHR) form a disordered region.

Belongs to the SmpB family.

Its subcellular location is the cytoplasm. Its function is as follows. Required for rescue of stalled ribosomes mediated by trans-translation. Binds to transfer-messenger RNA (tmRNA), required for stable association of tmRNA with ribosomes. tmRNA and SmpB together mimic tRNA shape, replacing the anticodon stem-loop with SmpB. tmRNA is encoded by the ssrA gene; the 2 termini fold to resemble tRNA(Ala) and it encodes a 'tag peptide', a short internal open reading frame. During trans-translation Ala-aminoacylated tmRNA acts like a tRNA, entering the A-site of stalled ribosomes, displacing the stalled mRNA. The ribosome then switches to translate the ORF on the tmRNA; the nascent peptide is terminated with the 'tag peptide' encoded by the tmRNA and targeted for degradation. The ribosome is freed to recommence translation, which seems to be the essential function of trans-translation. In Paracidovorax citrulli (strain AAC00-1) (Acidovorax citrulli), this protein is SsrA-binding protein.